The chain runs to 182 residues: Small ribosomal subunit protein uS4c (182 aa).

The segment at 8 to 36 is disordered; sequence LGALPGLTSKRPGSGSDPKNKSRSGKRSQ. An S4 RNA-binding domain is found at 82 to 143; the sequence is MRLDNILFRL…KQRSKALIQN (62 aa).

Belongs to the universal ribosomal protein uS4 family. In terms of assembly, part of the 30S ribosomal subunit. Contacts protein S5. The interaction surface between S4 and S5 is involved in control of translational fidelity.

The protein localises to the plastid. The protein resides in the chloroplast. One of the primary rRNA binding proteins, it binds directly to 16S rRNA where it nucleates assembly of the body of the 30S subunit. Its function is as follows. With S5 and S12 plays an important role in translational accuracy. This chain is Small ribosomal subunit protein uS4c (rps4), found in Dietes robinsoniana (Lord Howe wedding lily).